The primary structure comprises 240 residues: Ribonuclease PH (240 aa).

Phosphate is bound by residues arginine 86 and 124-126 (GTR).

This sequence belongs to the RNase PH family. Homohexameric ring arranged as a trimer of dimers.

It carries out the reaction tRNA(n+1) + phosphate = tRNA(n) + a ribonucleoside 5'-diphosphate. In terms of biological role, phosphorolytic 3'-5' exoribonuclease that plays an important role in tRNA 3'-end maturation. Removes nucleotide residues following the 3'-CCA terminus of tRNAs; can also add nucleotides to the ends of RNA molecules by using nucleoside diphosphates as substrates, but this may not be physiologically important. Probably plays a role in initiation of 16S rRNA degradation (leading to ribosome degradation) during starvation. The polypeptide is Ribonuclease PH (Rhodospirillum rubrum (strain ATCC 11170 / ATH 1.1.1 / DSM 467 / LMG 4362 / NCIMB 8255 / S1)).